The chain runs to 236 residues: UPF0502 protein Bcen2424_5610 (236 aa).

It belongs to the UPF0502 family.

The protein is UPF0502 protein Bcen2424_5610 of Burkholderia cenocepacia (strain HI2424).